Consider the following 739-residue polypeptide: Exocyst complex component 3-like protein (739 aa).

Disordered stretches follow at residues 1–21 (MDSKIQPTLRPGSSCPRPEWP) and 698–718 (AALSSLQAGPPPSPSTGRRAL). Residues 1 to 370 (MDSKIQPTLR…DVSQLEPLLT (370 aa)) are mediates interaction with EXOC2, EXOC4 and EXOC5.

It belongs to the SEC6 family. In terms of assembly, interacts with EXOC2, EXOC4 and EXOC5; may be part of the exocyst. Ubiquitously expressed.

Its subcellular location is the cytoplasmic vesicle. The protein localises to the secretory vesicle. Functionally, as part of the exocyst, may play a role in regulated exocytosis of insulin granules. This chain is Exocyst complex component 3-like protein (Exoc3l1), found in Mus musculus (Mouse).